A 361-amino-acid chain; its full sequence is Ribosomal RNA large subunit methyltransferase M (361 aa).

S-adenosyl-L-methionine is bound by residues Ser-193, 226–229 (CPGG), Asp-245, Asp-265, and Asp-283. Catalysis depends on Lys-312, which acts as the Proton acceptor.

Belongs to the class I-like SAM-binding methyltransferase superfamily. RNA methyltransferase RlmE family. RlmM subfamily. In terms of assembly, monomer.

It localises to the cytoplasm. The enzyme catalyses cytidine(2498) in 23S rRNA + S-adenosyl-L-methionine = 2'-O-methylcytidine(2498) in 23S rRNA + S-adenosyl-L-homocysteine + H(+). Its function is as follows. Catalyzes the 2'-O-methylation at nucleotide C2498 in 23S rRNA. The sequence is that of Ribosomal RNA large subunit methyltransferase M from Histophilus somni (strain 129Pt) (Haemophilus somnus).